Consider the following 2104-residue polypeptide: Protein Ycf2 (2104 aa).

1396–1403 contacts ATP; it reads GPVETGRS.

It belongs to the Ycf2 family.

Its subcellular location is the plastid. It is found in the chloroplast stroma. Its function is as follows. Probable ATPase of unknown function. Its presence in a non-photosynthetic plant (Epifagus virginiana) and experiments in tobacco indicate that it has an essential function which is probably not related to photosynthesis. This Adiantum capillus-veneris (Maidenhair fern) protein is Protein Ycf2 (ycf2-A).